Here is an 876-residue protein sequence, read N- to C-terminus: Alanine--tRNA ligase (876 aa).

Lysine 74 carries the post-translational modification N6-acetyllysine. Histidine 564, histidine 568, cysteine 666, and histidine 670 together coordinate Zn(2+).

It belongs to the class-II aminoacyl-tRNA synthetase family. In terms of assembly, homotetramer. Zn(2+) serves as cofactor.

It localises to the cytoplasm. The catalysed reaction is tRNA(Ala) + L-alanine + ATP = L-alanyl-tRNA(Ala) + AMP + diphosphate. Functionally, catalyzes the attachment of alanine to tRNA(Ala) in a two-step reaction: alanine is first activated by ATP to form Ala-AMP and then transferred to the acceptor end of tRNA(Ala). Also edits incorrectly charged Ser-tRNA(Ala) and Gly-tRNA(Ala) via its editing domain. The protein is Alanine--tRNA ligase of Escherichia coli (strain SMS-3-5 / SECEC).